A 134-amino-acid polypeptide reads, in one-letter code: Retinoid-binding protein 7 (134 aa).

Belongs to the calycin superfamily. Fatty-acid binding protein (FABP) family. As to expression, highly expressed in white adipose tissue and mammary gland.

The protein resides in the cytoplasm. In terms of biological role, intracellular transport of retinol. This is Retinoid-binding protein 7 (Rbp7) from Mus musculus (Mouse).